The sequence spans 124 residues: Translation initiation factor 5A (124 aa).

A Hypusine modification is found at lysine 36.

This sequence belongs to the eIF-5A family.

Its subcellular location is the cytoplasm. Its function is as follows. Functions by promoting the formation of the first peptide bond. This Haloquadratum walsbyi (strain DSM 16790 / HBSQ001) protein is Translation initiation factor 5A.